The primary structure comprises 95 residues: Co-chaperonin GroES (95 aa).

Belongs to the GroES chaperonin family. As to quaternary structure, heptamer of 7 subunits arranged in a ring. Interacts with the chaperonin GroEL.

It localises to the cytoplasm. Functionally, together with the chaperonin GroEL, plays an essential role in assisting protein folding. The GroEL-GroES system forms a nano-cage that allows encapsulation of the non-native substrate proteins and provides a physical environment optimized to promote and accelerate protein folding. GroES binds to the apical surface of the GroEL ring, thereby capping the opening of the GroEL channel. The polypeptide is Co-chaperonin GroES (Dichelobacter nodosus (strain VCS1703A)).